The primary structure comprises 829 residues: Probable beta-glucosidase H (829 aa).

N-linked (GlcNAc...) asparagine glycosylation is present at Asn13. Asp225 is an active-site residue. N-linked (GlcNAc...) asparagine glycosylation is found at Asn304, Asn473, Asn602, Asn627, and Asn664. The PA14 domain maps to 389–548 (RMLSNAVIHF…DPEQMVANAV (160 aa)).

The protein belongs to the glycosyl hydrolase 3 family.

It localises to the secreted. It catalyses the reaction Hydrolysis of terminal, non-reducing beta-D-glucosyl residues with release of beta-D-glucose.. It participates in glycan metabolism; cellulose degradation. In terms of biological role, beta-glucosidases are one of a number of cellulolytic enzymes involved in the degradation of cellulosic biomass. Catalyzes the last step releasing glucose from the inhibitory cellobiose. The protein is Probable beta-glucosidase H (bglH) of Neosartorya fischeri (strain ATCC 1020 / DSM 3700 / CBS 544.65 / FGSC A1164 / JCM 1740 / NRRL 181 / WB 181) (Aspergillus fischerianus).